We begin with the raw amino-acid sequence, 97 residues long: MSYLILSIVILLIGILGIILNRSNLIIMLMCVELVLLASTILLLFESRVLYTLFGQIFAIVILTVAAAESAIGLAIMVNYYRLRGTIAVRASNLLRG.

Transmembrane regions (helical) follow at residues 1–21 (MSYL…IILN), 25–45 (LIIM…LLLF), and 57–77 (IFAI…LAIM).

The protein belongs to the complex I subunit 4L family.

The protein localises to the mitochondrion membrane. The catalysed reaction is a ubiquinone + NADH + 5 H(+)(in) = a ubiquinol + NAD(+) + 4 H(+)(out). Functionally, core subunit of the mitochondrial membrane respiratory chain NADH dehydrogenase (Complex I) that is believed to belong to the minimal assembly required for catalysis. Complex I functions in the transfer of electrons from NADH to the respiratory chain. The immediate electron acceptor for the enzyme is believed to be ubiquinone. The sequence is that of NADH-ubiquinone oxidoreductase chain 4L (ND4L) from Sarcophyton glaucum (Toadstool umbrella leather coral).